Here is a 142-residue protein sequence, read N- to C-terminus: HTH-type transcriptional repressor NsrR (142 aa).

In terms of domain architecture, HTH rrf2-type spans 2-129; sequence QLTSFTDYGL…DRHTLAELVE (128 aa). A DNA-binding region (H-T-H motif) is located at residues 28 to 51; the sequence is ITEVTQVYGVSRNHMVKIINQLSH. [2Fe-2S] cluster contacts are provided by cysteine 91, cysteine 96, and cysteine 102.

It depends on [2Fe-2S] cluster as a cofactor.

Nitric oxide-sensitive repressor of genes involved in protecting the cell against nitrosative stress. May require iron for activity. The sequence is that of HTH-type transcriptional repressor NsrR from Proteus mirabilis (strain HI4320).